Consider the following 987-residue polypeptide: Collagen alpha-1(I) chain (987 aa).

Positions 1 to 987 (GPMGPSGPRG…PGPPGPPGPP (987 aa)) are disordered. Residues 20–39 (PQGFQGPPGEPGEPGASGPM) show a composition bias toward low complexity. Over residues 51–65 (NGDDGEAGKPGRPGE) the composition is skewed to basic and acidic residues. At serine 93 the chain carries Phosphoserine. Composition is skewed to low complexity over residues 101 to 117 (DAGP…PGEN) and 141 to 153 (AGAR…TGAA). Pro residues predominate over residues 155 to 167 (PPGPTGPAGPPGF). Low complexity-rich tracts occupy residues 201–251 (AGAA…APGP), 354–380 (KGIT…QDGR), 389–408 (ARGQ…AGEP), 422–444 (AVGA…AGPA), 516–543 (NGAP…PGIQ), 602–614 (PNGP…ARGA), 627–654 (AGFA…KGDA), 662–677 (PTGA…APGP), 686–696 (ATGFPGAAGRV), and 737–752 (SGEK…AGAP). Residues 756-765 (GPQGIGGQRG) show a composition bias toward gly residues. A compositionally biased stretch (pro residues) spans 799 to 809 (PPGPMGPPGIA). Residues 811-826 (PPGESGREGSPGAEGS) show a composition bias toward low complexity. Pro residues predominate over residues 845-860 (AGPPGAPGAPGAPGPV). The segment covering 896-907 (RGDKGETGEQGD) has biased composition (basic and acidic residues). Low complexity predominate over residues 923–956 (PGEQGPSGASGPAGPRGPPGSAGAPGKDGINGIP). A compositionally biased stretch (pro residues) spans 972-987 (VGPPGPPGPPGPPGPP).

The protein belongs to the fibrillar collagen family. As to quaternary structure, trimers of one alpha 2(I) and two alpha 1(I) chains. In terms of processing, prolines at the third position of the tripeptide repeating unit (G-X-Y) are hydroxylated in some or all of the chains. In terms of tissue distribution, forms the fibrils of tendon, ligaments and bones. In bones, the fibrils are mineralized with calcium hydroxyapatite.

The protein resides in the secreted. It localises to the extracellular space. The protein localises to the extracellular matrix. In terms of biological role, type I collagen is a member of group I collagen (fibrillar forming collagen). This is Collagen alpha-1(I) chain from Orycteropus afer (Aardvark).